We begin with the raw amino-acid sequence, 291 residues long: 33 kDa chaperonin (291 aa).

Intrachain disulfides connect Cys235–Cys237 and Cys268–Cys271.

It belongs to the HSP33 family. Post-translationally, under oxidizing conditions two disulfide bonds are formed involving the reactive cysteines. Under reducing conditions zinc is bound to the reactive cysteines and the protein is inactive.

The protein localises to the cytoplasm. Redox regulated molecular chaperone. Protects both thermally unfolding and oxidatively damaged proteins from irreversible aggregation. Plays an important role in the bacterial defense system toward oxidative stress. The protein is 33 kDa chaperonin of Bacillus pumilus (strain SAFR-032).